Consider the following 420-residue polypeptide: Exodeoxyribonuclease 7 large subunit (420 aa).

This sequence belongs to the XseA family. As to quaternary structure, heterooligomer composed of large and small subunits.

It localises to the cytoplasm. It carries out the reaction Exonucleolytic cleavage in either 5'- to 3'- or 3'- to 5'-direction to yield nucleoside 5'-phosphates.. Bidirectionally degrades single-stranded DNA into large acid-insoluble oligonucleotides, which are then degraded further into small acid-soluble oligonucleotides. This Helicobacter pylori (strain P12) protein is Exodeoxyribonuclease 7 large subunit.